Reading from the N-terminus, the 171-residue chain is Putative defense protein (171 aa).

The N-terminal stretch at Met1 to Ala23 is a signal peptide. Residues Arg24–Ser171 enclose the Reelin domain. A disulfide bond links Cys33 and Cys110. Asn41 is a glycosylation site (N-linked (GlcNAc...) asparagine).

The protein belongs to the insect defense protein family.

It is found in the secreted. In terms of biological role, may have antimicrobial activity. The sequence is that of Putative defense protein from Bombyx mori (Silk moth).